The chain runs to 299 residues: MSAKPEVGLVREASRQIVAGGSAGLVEICLMHPLDVVKTRFQIQRCATDPNSYKSLVDSFRMIFQTERLFGFYKGILPPILAETPKRAVKFFTFEQYKKLLGYVSLSPALTFTIAGLGSGLTEAIVVNPFEVVKVGLQANRNTFAKQPSTVGYARQIIKKEGWGLQGLNKGLTATLGRHGVFNMVYFGFYYNVKNMIPVNKDPTLEFLRKFGIGLLSGTIASVINIPFDVAKSRIQGPQPVPGEIKYRTCFKTMATVYQEEGILALYKGLLPKIMRLGPGGAVMLLVYEYTYSWLQENW.

Solcar repeat units lie at residues 11–100 (REAS…YKKL), 107–196 (SPAL…VKNM), and 205–294 (LEFL…TYSW). A run of 6 helical transmembrane segments spans residues 17–37 (IVAGGSAGLVEICLMHPLDVV), 70–89 (FGFYKGILPPILAETPKRAV), 113–133 (TIAGLGSGLTEAIVVNPFEVV), 167–187 (GLNKGLTATLGRHGVFNMVYF), 205–225 (LEFLRKFGIGLLSGTIASVIN), and 277–297 (LGPGGAVMLLVYEYTYSWLQE).

Belongs to the mitochondrial carrier (TC 2.A.29) family.

It is found in the mitochondrion inner membrane. The enzyme catalyses 2-oxoadipate(in) + 2-oxoglutarate(out) = 2-oxoadipate(out) + 2-oxoglutarate(in). It catalyses the reaction hexanedioate(in) + 2-oxoglutarate(out) = hexanedioate(out) + 2-oxoglutarate(in). The catalysed reaction is L-2-aminoadipate(in) + 2-oxoglutarate(out) = L-2-aminoadipate(out) + 2-oxoglutarate(in). It carries out the reaction glutarate(in) + 2-oxoglutarate(out) = glutarate(out) + 2-oxoglutarate(in). The enzyme catalyses 2-oxoheptanedioate(in) + 2-oxoglutarate(out) = 2-oxoheptanedioate(out) + 2-oxoglutarate(in). It catalyses the reaction heptanedioate(in) + 2-oxoglutarate(out) = heptanedioate(out) + 2-oxoglutarate(in). The catalysed reaction is citrate(in) + 2-oxoglutarate(out) = citrate(out) + 2-oxoglutarate(in). Transports dicarboxylates across the inner membranes of mitochondria by a counter-exchange mechanism. Can transport 2-oxoadipate (2-oxohexanedioate), 2-oxoglutarate, adipate (hexanedioate), glutarate, and to a lesser extent, pimelate (heptanedioate), 2-oxopimelate (2-oxoheptanedioate), 2-aminoadipate (2-aminohexanedioate), oxaloacetate, and citrate. Plays a central role in catabolism of lysine, hydroxylysine, and tryptophan, by transporting common metabolite intermediates (such as 2-oxoadipate) into the mitochondria, where it is converted into acetyl-CoA and can enter the citric acid (TCA) cycle. The protein is Mitochondrial 2-oxodicarboxylate carrier (SLC25A21) of Pongo abelii (Sumatran orangutan).